Consider the following 31-residue polypeptide: Cytochrome b6-f complex subunit 6 (31 aa).

The chain crosses the membrane as a helical span at residues 3-23 (IITSYFGFLLTALTIASALFI).

It belongs to the PetL family. The 4 large subunits of the cytochrome b6-f complex are cytochrome b6, subunit IV (17 kDa polypeptide, PetD), cytochrome f and the Rieske protein, while the 4 small subunits are PetG, PetL, PetM and PetN. The complex functions as a dimer.

The protein resides in the plastid. Its subcellular location is the chloroplast thylakoid membrane. Its function is as follows. Component of the cytochrome b6-f complex, which mediates electron transfer between photosystem II (PSII) and photosystem I (PSI), cyclic electron flow around PSI, and state transitions. PetL is important for photoautotrophic growth as well as for electron transfer efficiency and stability of the cytochrome b6-f complex. The sequence is that of Cytochrome b6-f complex subunit 6 from Helianthus annuus (Common sunflower).